The following is a 308-amino-acid chain: uncharacterized protein (308 aa).

The first 19 residues, 1 to 19, serve as a signal peptide directing secretion; the sequence is MKLLLILILIINNYNLCLS. Residues asparagine 25 and asparagine 300 are each glycosylated (N-linked (GlcNAc...) asparagine).

Its subcellular location is the secreted. This is an uncharacterized protein from Dictyostelium discoideum (Social amoeba).